Consider the following 194-residue polypeptide: Leucyl/phenylalanyl-tRNA--protein transferase (194 aa).

The protein belongs to the L/F-transferase family.

It localises to the cytoplasm. It catalyses the reaction N-terminal L-lysyl-[protein] + L-leucyl-tRNA(Leu) = N-terminal L-leucyl-L-lysyl-[protein] + tRNA(Leu) + H(+). It carries out the reaction N-terminal L-arginyl-[protein] + L-leucyl-tRNA(Leu) = N-terminal L-leucyl-L-arginyl-[protein] + tRNA(Leu) + H(+). The catalysed reaction is L-phenylalanyl-tRNA(Phe) + an N-terminal L-alpha-aminoacyl-[protein] = an N-terminal L-phenylalanyl-L-alpha-aminoacyl-[protein] + tRNA(Phe). Functions in the N-end rule pathway of protein degradation where it conjugates Leu, Phe and, less efficiently, Met from aminoacyl-tRNAs to the N-termini of proteins containing an N-terminal arginine or lysine. The protein is Leucyl/phenylalanyl-tRNA--protein transferase of Chlorobium phaeobacteroides (strain DSM 266 / SMG 266 / 2430).